The sequence spans 301 residues: MRIEGVVVATVTPFAKDGVNYEGLRALLSKIVEEGYQGVFPTSSTGEVTKLTFEERVKAMEVAKEVAGGRALVVAGTGTGDHLSTIEIARRYRDVGVDVLLITPPYYIQYDWAAVYAFYKRVLDKVDMPVVLYTIPLATGYNIPVEVFELVANEYSQVVGVKDSSGDFRYHLDLIHLLGKRLSVLQGLDLLFVPSLLMGAHGGVLAGPNFLGRITLEQYRLVKEGKTAEAVALHNKLMPLWRFMGGCGLVGKLGGKWPTLYKVATQMVRGIDMGPPREPLPPIDDRDRKELEKLLKDLGLI.

Residues Ser-44 and Tyr-107 each act as charge relay system in the active site. Tyr-133 (proton donor) is an active-site residue. Lys-162 acts as the Schiff-base intermediate with substrate in catalysis.

Belongs to the DapA family. In terms of assembly, homotetramer.

It is found in the cytoplasm. This is an uncharacterized protein from Pyrobaculum neutrophilum (strain DSM 2338 / JCM 9278 / NBRC 100436 / V24Sta) (Thermoproteus neutrophilus).